The primary structure comprises 147 residues: Large ribosomal subunit protein bL9 (147 aa).

It belongs to the bacterial ribosomal protein bL9 family.

Its function is as follows. Binds to the 23S rRNA. The chain is Large ribosomal subunit protein bL9 from Mesoplasma florum (strain ATCC 33453 / NBRC 100688 / NCTC 11704 / L1) (Acholeplasma florum).